We begin with the raw amino-acid sequence, 154 residues long: Terephthalate 1,2-dioxygenase, terminal oxygenase component subunit beta 2 (154 aa).

It belongs to the bacterial ring-hydroxylating dioxygenase beta subunit family. As to quaternary structure, heterotetramer composed of 2 alpha (TphA2I and TphA2II) and 2 beta (TphA3I and TphA3II) subunits. Part of a multicomponent enzyme system composed of a reductase (TphA1I or TphA1II) and a two-subunit oxygenase component (TphA2I or TphA2II and TphA3I or TphA3II). The cofactor is Fe cation.

The catalysed reaction is terephthalate + NADH + O2 + H(+) = (3S,4R)-3,4-dihydroxycyclohexa-1,5-diene-1,4-dicarboxylate + NAD(+). Inhibited by EDTA. Functionally, component of the terephthalate 1,2-dioxygenase multicomponent enzyme system which catalyzes the dioxygenation of terephthalate (TER/TPA) to 1,2-dihydroxy-3,5-cyclohexadiene-1,4-dicarboxylic acid (DCD). It can also use 2,5-dicarboxypyridine (PDC) and 1,4-napthalenedicarboxylic acid (NDC) as substrates, and preferentially uses NADPH which is the physiological electron donor. The polypeptide is Terephthalate 1,2-dioxygenase, terminal oxygenase component subunit beta 2 (tphA3II) (Comamonas sp).